The following is an 803-amino-acid chain: Bromodomain-containing protein 2 (803 aa).

Met-1 is modified (N-acetylmethionine). Residues Met-1 to Ala-28 are disordered. Thr-6 carries the phosphothreonine modification. Ser-37 is modified (phosphoserine). Residues Ala-53–Gly-73 are disordered. The Bromo 1 domain maps to Arg-74–Met-180. Positions 112, 155, 156, 157, 160, and 161 each coordinate a protein. Disordered regions lie at residues Pro-268 to Gln-349, Glu-456 to Ser-653, and Glu-739 to Gly-803. The span at Thr-285–Ser-298 shows a compositional bias: low complexity. Phosphoserine is present on residues Ser-298, Ser-301, and Ser-305. The segment covering Met-316–Pro-332 has biased composition (basic and acidic residues). Residues Gly-344–Met-453 enclose the Bromo 2 domain. A compositionally biased stretch (acidic residues) spans Ser-481–Glu-515. A compositionally biased stretch (basic residues) spans Lys-545–Arg-567. The Nuclear localization signal motif lies at Lys-556–Lys-560. An NET domain is found at Asp-634–Pro-716. Ser-635 carries the phosphoserine modification. Residues Ser-641–Leu-652 show a composition bias toward basic and acidic residues. The segment covering Ser-777–Thr-797 has biased composition (low complexity).

It belongs to the BET family. In terms of assembly, homodimer. Interacts with E2F1. Interacts with (acetylated) STAT3; promoting STAT3 recruitment to chromatin. Interacts with CTCF; promoting BRD2 recruitment to chromatin.

It localises to the nucleus. The protein resides in the chromosome. In terms of biological role, chromatin reader protein that specifically recognizes and binds histone H4 acetylated at 'Lys-5' and 'Lys-12' (H4K5ac and H4K12ac, respectively), thereby controlling gene expression and remodeling chromatin structures. Recruits transcription factors and coactivators to target gene sites, and activates RNA polymerase II machinery for transcriptional elongation. Plays a key role in genome compartmentalization via its association with CTCF and cohesin: recruited to chromatin by CTCF and promotes formation of topologically associating domains (TADs) via its ability to bind acetylated histones, contributing to CTCF boundary formation and enhancer insulation. Also recognizes and binds acetylated non-histone proteins, such as STAT3. Involved in inflammatory response by regulating differentiation of naive CD4(+) T-cells into T-helper Th17: recognizes and binds STAT3 acetylated at 'Lys-87', promoting STAT3 recruitment to chromatin. In addition to acetylated lysines, also recognizes and binds lysine residues on histones that are both methylated and acetylated on the same side chain to form N6-acetyl-N6-methyllysine (Kacme), an epigenetic mark of active chromatin associated with increased transcriptional initiation. Specifically binds histone H4 acetyl-methylated at 'Lys-5' and 'Lys-12' (H4K5acme and H4K12acme, respectively). In Canis lupus familiaris (Dog), this protein is Bromodomain-containing protein 2 (BRD2).